We begin with the raw amino-acid sequence, 181 residues long: UPF0397 protein str0306 (181 aa).

The next 5 helical transmembrane spans lie at 11-31, 45-65, 72-92, 109-129, and 147-167; these read ATGI…IPIF, LFSV…GHAL, GNIS…IGLF, IWFN…VTPI, and FVAG…LLAI.

This sequence belongs to the UPF0397 family.

It localises to the cell membrane. The sequence is that of UPF0397 protein str0306 from Streptococcus thermophilus (strain CNRZ 1066).